Here is a 258-residue protein sequence, read N- to C-terminus: uncharacterized protein (258 aa).

It belongs to the IIV-6 219L family.

This is an uncharacterized protein from Aedes vexans (Inland floodwater mosquito).